Here is a 251-residue protein sequence, read N- to C-terminus: Diphthine synthase (251 aa).

Residues aspartate 83, leucine 86, 111-112 (SI), leucine 163, and leucine 205 contribute to the S-adenosyl-L-methionine site.

This sequence belongs to the diphthine synthase family. As to quaternary structure, homodimer.

It catalyses the reaction 2-[(3S)-amino-3-carboxypropyl]-L-histidyl-[translation elongation factor 2] + 3 S-adenosyl-L-methionine = diphthine-[translation elongation factor 2] + 3 S-adenosyl-L-homocysteine + 3 H(+). It functions in the pathway protein modification; peptidyl-diphthamide biosynthesis. Functionally, S-adenosyl-L-methionine-dependent methyltransferase that catalyzes the trimethylation of the amino group of the modified target histidine residue in translation elongation factor 2 (EF-2), to form an intermediate called diphthine. The three successive methylation reactions represent the second step of diphthamide biosynthesis. This chain is Diphthine synthase, found in Pyrobaculum calidifontis (strain DSM 21063 / JCM 11548 / VA1).